The chain runs to 155 residues: Ribosome maturation factor RimP (155 aa).

This sequence belongs to the RimP family.

The protein localises to the cytoplasm. In terms of biological role, required for maturation of 30S ribosomal subunits. This is Ribosome maturation factor RimP from Gemmatimonas aurantiaca (strain DSM 14586 / JCM 11422 / NBRC 100505 / T-27).